A 432-amino-acid polypeptide reads, in one-letter code: Putative transferase At1g60990, chloroplastic (432 aa).

The N-terminal 57 residues, 1-57 (MNLLQSCKDMAMMMRIDSVSHITNTALLPCLYNGTVLRRRSLSLRKCGFRERKFQLR), are a transit peptide targeting the chloroplast.

The protein belongs to the GcvT family. Expressed in young leaves (at protein level).

Its subcellular location is the plastid. The protein resides in the chloroplast. Functionally, folate-dependent protein involved in Fe/S cluster biogenesis. Functionally complements an E.coli mutant defective in ygfZ. The polypeptide is Putative transferase At1g60990, chloroplastic (Arabidopsis thaliana (Mouse-ear cress)).